The sequence spans 245 residues: uncharacterized protein (245 aa).

Positions 162–174 (KEQSDVTTSERTR) are enriched in basic and acidic residues. The tract at residues 162 to 183 (KEQSDVTTSERTRSPPGSSKTT) is disordered.

This is an uncharacterized protein from Homo sapiens (Human).